Here is a 229-residue protein sequence, read N- to C-terminus: UPF0758 protein Mbur_0382 (229 aa).

Residues 106 to 228 (KIRSANDVYS…YVSLKEEGYI (123 aa)) form the MPN domain. Zn(2+)-binding residues include His-177, His-179, and Asp-190. The short motif at 177–190 (HNHPSGDPAPSRED) is the JAMM motif element.

This sequence belongs to the UPF0758 family.

The protein is UPF0758 protein Mbur_0382 of Methanococcoides burtonii (strain DSM 6242 / NBRC 107633 / OCM 468 / ACE-M).